The chain runs to 532 residues: MLLQAFLFLLAGFAAKISASMTNETSDRPLVHFTPNKGWMNDPNGLWYDAKEGKWHLYFQYNPNDTVWGLPLFWGHATSDDLTHWQDEPVAIAPKRKDSGAYSGSMVIDYNNTSGFFNDTIDPRQRCVAIWTYNTPESEEQYISYSLDGGYTFTEYQKNPVLAANSTQFRDPKVFWYEPSKKWIMTAAKSQDYKIEIYSSDDLKSWKLESAFANEGFLGYQYECPGLIEVPSEQDPSKSHWVMFISINPGAPAGGSFNQYFVGSFNGHHFEAFDNQSRVVDFGKDYYALQTFFNTDPTYGSALGIAWASNWEYSAFVPSNPWRSSMSLVRPFSLNTEYQANPETELINLKAEPILNISSAGPWSRFATNTTLTKANSYNVDLSNSTGTLEFELVYAVNTTQTISKSVFADLSLWFKGLEDPEEYLRMGFEVSASSFFLDRGNSKVKFVKENPYFTNRMSVNNQPFKSENDLSYYKVYGLLDQNILELYFNDGDVVSTNTYFMTTGNALGSVNMTTGVDNLFYIDKFQVREVK.

An N-terminal signal peptide occupies residues 1-19; sequence MLLQAFLFLLAGFAAKISA. N-linked (GlcNAc...) asparagine glycosylation occurs at Asn23. Residues 39-42 and Gln60 contribute to the substrate site; that span reads WMND. Residue Asp42 is part of the active site. Asn64 is a glycosylation site (N-linked (GlcNAc...) asparagine). A substrate-binding site is contributed by 102-103; sequence YS. Asn111, Asn112, Asn118, and Asn165 each carry an N-linked (GlcNAc...) asparagine glycan. Substrate is bound by residues 170–171 and Glu223; that span reads RD. An N-linked (GlcNAc...) asparagine glycan is attached at Asn275. Trp311 contributes to the substrate binding site. Residues Asn356, Asn369, Asn384, Asn398, and Asn512 are each glycosylated (N-linked (GlcNAc...) asparagine).

The protein belongs to the glycosyl hydrolase 32 family. In terms of processing, isoform Secreted is glycosylated. Isoform Intracellular is not glycosylated.

It is found in the cytoplasm. The protein localises to the secreted. It carries out the reaction Hydrolysis of terminal non-reducing beta-D-fructofuranoside residues in beta-D-fructofuranosides.. The protein is Invertase 1 (SUC1) of Saccharomyces cerevisiae (Baker's yeast).